A 368-amino-acid polypeptide reads, in one-letter code: Cytochrome b (368 aa).

Transmembrane regions (helical) follow at residues 25–45 (FGSM…FLAM), 69–90 (WIMQ…YIHI), 105–125 (WLSG…GYVL), and 170–190 (FFAL…IHII). Heme b contacts are provided by histidine 75 and histidine 89. Positions 174 and 188 each coordinate heme b. A ubiquinone is bound at residue histidine 193. 4 consecutive transmembrane segments (helical) span residues 218 to 238 (YKDM…MSFT), 280 to 300 (LGGT…PFTH), 312 to 332 (LTQT…WTAT), and 339 to 358 (FIFI…IINP).

Belongs to the cytochrome b family. The cytochrome bc1 complex contains 3 respiratory subunits (MT-CYB, CYC1 and UQCRFS1), 2 core proteins (UQCRC1 and UQCRC2) and probably 6 low-molecular weight proteins. Requires heme b as cofactor.

Its subcellular location is the mitochondrion inner membrane. Component of the ubiquinol-cytochrome c reductase complex (complex III or cytochrome b-c1 complex) that is part of the mitochondrial respiratory chain. The b-c1 complex mediates electron transfer from ubiquinol to cytochrome c. Contributes to the generation of a proton gradient across the mitochondrial membrane that is then used for ATP synthesis. The chain is Cytochrome b (MT-CYB) from Notechis ater (Black tiger snake).